The chain runs to 622 residues: Modification methylase LlaI (622 aa).

Belongs to the N(4)/N(6)-methyltransferase family.

It carries out the reaction a 2'-deoxyadenosine in DNA + S-adenosyl-L-methionine = an N(6)-methyl-2'-deoxyadenosine in DNA + S-adenosyl-L-homocysteine + H(+). Functionally, an alpha subtype methylase that modifies unknown specific adenine residues, and protects the DNA from cleavage by the LlaI endonuclease. The sequence is that of Modification methylase LlaI from Lactococcus lactis subsp. lactis (Streptococcus lactis).